The following is a 276-amino-acid chain: Putative pyridoxine kinase (276 aa).

ATP is bound at residue Asn-139. Residue Glu-142 coordinates Mg(2+). Residues 176–180 (KGGKA), Asp-188, Gly-213, and Lys-238 each bind ATP.

Belongs to the ThiD family.

The enzyme catalyses pyridoxal + ATP = pyridoxal 5'-phosphate + ADP + H(+). Phosphorylates B6 vitamers; functions in a salvage pathway. Uses pyridoxal, pyridoxine, and pyridoxamine as substrates. In Staphylococcus epidermidis (strain ATCC 35984 / DSM 28319 / BCRC 17069 / CCUG 31568 / BM 3577 / RP62A), this protein is Putative pyridoxine kinase (pdxK).